Here is a 436-residue protein sequence, read N- to C-terminus: MIDYINVIGAGLAGCEAAWQIAKRGIKVKLFEMKPKKFSPAHHMETFAELVCSNSLRSNQLENAVGLLKEEMRLLNSIIMKCADAAQVPAGGALAVDRTKFSQMVTELIKQNENIEVINEEVRELPKEGITIVATGPLTSGDLSKHLADFVGEGYLHFFDAAAPIVTFESIDMNKAFKAARYGRGTDDYINCPMNKEEYEIFWNELVNAELAEVKDFDREVVFEGCMPVETMAKRGKDTLRFGPLKPVGLVDPNTGKEPYAVVQLRQDNSEGTMYNMVGFQTRLKWPEQKRVFRLIPGLENAEFVRYGVMHRNTFINSPVLLDATYCLKKSPNIYFAGQITGVEGYVESASSGMVAGINAAMDFLGKDRVVFPKSTAIGALSHYVSDSSIKNFQPMNVNFGIMESFPLKIRDKRKRNYETAMRALKILKEYVSKYS.

9 to 14 is an FAD binding site; sequence GAGLAG.

Belongs to the MnmG family. TrmFO subfamily. FAD is required as a cofactor.

It is found in the cytoplasm. It carries out the reaction uridine(54) in tRNA + (6R)-5,10-methylene-5,6,7,8-tetrahydrofolate + NADH + H(+) = 5-methyluridine(54) in tRNA + (6S)-5,6,7,8-tetrahydrofolate + NAD(+). The catalysed reaction is uridine(54) in tRNA + (6R)-5,10-methylene-5,6,7,8-tetrahydrofolate + NADPH + H(+) = 5-methyluridine(54) in tRNA + (6S)-5,6,7,8-tetrahydrofolate + NADP(+). Catalyzes the folate-dependent formation of 5-methyl-uridine at position 54 (M-5-U54) in all tRNAs. The chain is Methylenetetrahydrofolate--tRNA-(uracil-5-)-methyltransferase TrmFO from Acetivibrio thermocellus (strain ATCC 27405 / DSM 1237 / JCM 9322 / NBRC 103400 / NCIMB 10682 / NRRL B-4536 / VPI 7372) (Clostridium thermocellum).